We begin with the raw amino-acid sequence, 256 residues long: Tryptophan synthase alpha chain (256 aa).

Residues E46 and D57 each act as proton acceptor in the active site.

Belongs to the TrpA family. In terms of assembly, tetramer of two alpha and two beta chains.

The enzyme catalyses (1S,2R)-1-C-(indol-3-yl)glycerol 3-phosphate + L-serine = D-glyceraldehyde 3-phosphate + L-tryptophan + H2O. Its pathway is amino-acid biosynthesis; L-tryptophan biosynthesis; L-tryptophan from chorismate: step 5/5. In terms of biological role, the alpha subunit is responsible for the aldol cleavage of indoleglycerol phosphate to indole and glyceraldehyde 3-phosphate. The chain is Tryptophan synthase alpha chain from Bacteroides thetaiotaomicron (strain ATCC 29148 / DSM 2079 / JCM 5827 / CCUG 10774 / NCTC 10582 / VPI-5482 / E50).